The primary structure comprises 361 residues: MAGNSIGQFFRVTTFGESHGIALGCIVDGVPPGIPLTEADLQHDLDRRRPGTSRYTTQRREPDQVKILSGVFEGVTTGTSIGLLIENTDQRSQDYGAIKDVFRPGHADYTYEQKYGQRDYRGGGRSSARETAMRVAAGAIAKKYLQQQHGVKVRGYLSQIGDVTCELKDWEQVEQNPFFCPDIDKLDALDELMRALKKEGDSIGAKVSVVAESVPVGLGEPVFDRLDADLAHALMSINAVKGVEIGDGFAVVTKRGSENRDEITPEGFQSNHAGGILGGISSGQNIVAHLALKPTSSIMVPGKTINRQGEATEMVTRGRHDPCVGIRAVPIAEAMMAIVLMDHLLRQRAQCGDVNSQVPRW.

NADP(+)-binding residues include Arg-48 and Arg-54. Residues 125–127 (RSS), 238–239 (NA), Gly-278, 293–297 (KPTSS), and Arg-319 contribute to the FMN site.

It belongs to the chorismate synthase family. Homotetramer. The cofactor is FMNH2.

It catalyses the reaction 5-O-(1-carboxyvinyl)-3-phosphoshikimate = chorismate + phosphate. The protein operates within metabolic intermediate biosynthesis; chorismate biosynthesis; chorismate from D-erythrose 4-phosphate and phosphoenolpyruvate: step 7/7. Its function is as follows. Catalyzes the anti-1,4-elimination of the C-3 phosphate and the C-6 proR hydrogen from 5-enolpyruvylshikimate-3-phosphate (EPSP) to yield chorismate, which is the branch point compound that serves as the starting substrate for the three terminal pathways of aromatic amino acid biosynthesis. This reaction introduces a second double bond into the aromatic ring system. The chain is Chorismate synthase from Pectobacterium atrosepticum (strain SCRI 1043 / ATCC BAA-672) (Erwinia carotovora subsp. atroseptica).